A 331-amino-acid chain; its full sequence is Aflatoxin B1 aldehyde reductase member 4 (331 aa).

Aspartate 44 is a binding site for NADP(+). The active-site Proton donor is tyrosine 49. Serine 85 carries the post-translational modification Phosphoserine. Histidine 113 is a binding site for substrate. NADP(+) is bound by residues 143-144 (SN), glutamine 169, 198-208 (NPLAGGLLTGK), and arginine 222. Tyrosine 232 contacts substrate. 290 to 298 (SSLEQLEQN) serves as a coordination point for NADP(+).

The protein belongs to the aldo/keto reductase family. Aldo/keto reductase 2 subfamily. In terms of tissue distribution, mainly expressed in uterus.

Functionally, can reduce the dialdehyde protein-binding form of aflatoxin B1 (AFB1) to the non-binding AFB1 dialcohol. May be involved in protection of liver against the toxic and carcinogenic effects of AFB1, a potent hepatocarcinogen. The protein is Aflatoxin B1 aldehyde reductase member 4 (AKR7L) of Homo sapiens (Human).